The chain runs to 321 residues: Thioredoxin reductase tcpT (321 aa).

FAD is bound by residues 14-17 (GGPA), 36-41 (DSGRYR), H49, and A114. Residues C138 and C141 are joined by a disulfide bond. Residues D282 and 289 to 290 (NV) each bind FAD.

Belongs to the class-II pyridine nucleotide-disulfide oxidoreductase family. In terms of assembly, homodimer. It depends on FAD as a cofactor.

It functions in the pathway secondary metabolite biosynthesis. Thioredoxin reductase; part of the gene cluster that mediates the biosynthesis of an unusual class of epipolythiodioxopiperazines (ETPs) lacking the reactive thiol group important for toxicity. Firstly, L-tyrosine is prenylated by tcpD, before undergoing condensation with L-glycine in a reaction catalyzed by the NRPS tcpP leading to the diketopiperazine (DKP) backbone. Afterwards the alpha-carbon of tyrosine is oxidized by the cytochrome P450 tcpC to form a hydroxyl group. However, in contrast other ETP biosynthesis pathways studied so far, tcpC is not able to bishydroxylate the DKP at both alpha-carbon positions, but hydroxylates the alpha-carbon of the tyrosine part and the nitrogen of the glycine part. The next steps involve an alpha,beta-elimination reaction catalyzed by tcpI, a methylation by the methyltransferase tcpN the action of the four enzyme cascade tcpG/K/J/I. Due to a dysfunctional cytochrome P450 monooxygenase tcpC, the pathway leads to the biosynthesis of probable non-toxic metabolites lacking the reactive thiol group. This is Thioredoxin reductase tcpT from Claviceps purpurea (strain 20.1) (Ergot fungus).